The sequence spans 156 residues: D-aminoacyl-tRNA deacylase (156 aa).

The short motif at 137–138 is the Gly-cisPro motif, important for rejection of L-amino acids element; it reads GP.

Belongs to the DTD family. As to quaternary structure, homodimer.

It localises to the cytoplasm. It catalyses the reaction glycyl-tRNA(Ala) + H2O = tRNA(Ala) + glycine + H(+). The enzyme catalyses a D-aminoacyl-tRNA + H2O = a tRNA + a D-alpha-amino acid + H(+). Functionally, an aminoacyl-tRNA editing enzyme that deacylates mischarged D-aminoacyl-tRNAs. Also deacylates mischarged glycyl-tRNA(Ala), protecting cells against glycine mischarging by AlaRS. Acts via tRNA-based rather than protein-based catalysis; rejects L-amino acids rather than detecting D-amino acids in the active site. By recycling D-aminoacyl-tRNA to D-amino acids and free tRNA molecules, this enzyme counteracts the toxicity associated with the formation of D-aminoacyl-tRNA entities in vivo and helps enforce protein L-homochirality. The protein is D-aminoacyl-tRNA deacylase of Ruegeria sp. (strain TM1040) (Silicibacter sp.).